Reading from the N-terminus, the 471-residue chain is Probable ribonuclease FAU-1 (471 aa).

It belongs to the FAU-1 family.

Functionally, probable RNase involved in rRNA stability through maturation and/or degradation of precursor rRNAs. Preferentially cleaves UA sequences in the 5' precursor region of 5S rRNA. Binds to RNA in loop regions with AU-rich sequences. In Thermococcus kodakarensis (strain ATCC BAA-918 / JCM 12380 / KOD1) (Pyrococcus kodakaraensis (strain KOD1)), this protein is Probable ribonuclease FAU-1.